Consider the following 100-residue polypeptide: uncharacterized protein (100 aa).

The protein belongs to the csb family.

This is an uncharacterized protein from Dictyostelium discoideum (Social amoeba).